The primary structure comprises 1394 residues: Coiled-coil domain-containing protein 7 (1394 aa).

Residues 308-340 (LLDAEYKQIQRDFELLSEEKLVLENELQKLKDT) are a coiled coil. The interval 345–375 (STNNRTKKAAKTVKKKDKGKSEDSEKKMSSE) is disordered. Positions 349–362 (RTKKAAKTVKKKDK) are enriched in basic residues. Basic and acidic residues predominate over residues 363-375 (GKSEDSEKKMSSE). Residues 383-421 (LDQVQKVARLEIENKVLQEQLKQALQEAEKAKHQLNYFL) adopt a coiled-coil conformation. Disordered regions lie at residues 431–617 (EGKT…EVPD), 634–806 (EQMK…LEHQ), and 819–842 (NEKL…PMLK). Polar residues predominate over residues 437–446 (TMRVGNSQTE). The span at 447-462 (VKGEDSKTIPLEKETG) shows a compositional bias: basic and acidic residues. The segment covering 464–473 (SLVSDSGGQK) has biased composition (polar residues). Residues 491 to 500 (LIEKSSEKKR) are compositionally biased toward basic and acidic residues. Composition is skewed to polar residues over residues 503–513 (PAISDLSQILK), 521–538 (LESS…NKSP), and 546–571 (LTTV…NETV). Positions 583–600 (ESKKADVSEEQLQKKTEE) are enriched in basic and acidic residues. Positions 663 to 679 (SRSQSETKNLEATGNES) are enriched in polar residues. Residues 695–707 (QDTKSKTEVEVKK) show a composition bias toward basic and acidic residues. A compositionally biased stretch (polar residues) spans 711-721 (FQDNQLNTHNE). Residues 722 to 736 (VPNERLIVEHQESMS) are compositionally biased toward basic and acidic residues. Over residues 780–790 (KEQSTLKGQRI) the composition is skewed to polar residues. Composition is skewed to basic and acidic residues over residues 791–806 (TTHE…LEHQ) and 830–842 (THGE…PMLK).

Its function is as follows. May play a role in tumorigenesis. The sequence is that of Coiled-coil domain-containing protein 7 (CCDC7) from Macaca fascicularis (Crab-eating macaque).